The following is an 88-amino-acid chain: Small ribosomal subunit protein bS20 (88 aa).

It belongs to the bacterial ribosomal protein bS20 family.

Its function is as follows. Binds directly to 16S ribosomal RNA. The polypeptide is Small ribosomal subunit protein bS20 (Desulforamulus reducens (strain ATCC BAA-1160 / DSM 100696 / MI-1) (Desulfotomaculum reducens)).